The primary structure comprises 79 residues: Large ribosomal subunit protein bL31 (79 aa).

It belongs to the bacterial ribosomal protein bL31 family. Type A subfamily. As to quaternary structure, part of the 50S ribosomal subunit.

Functionally, binds the 23S rRNA. The protein is Large ribosomal subunit protein bL31 of Synechococcus sp. (strain CC9902).